We begin with the raw amino-acid sequence, 570 residues long: MSLHKHRSRMVTQGLTRTPHRAFLRATGFDDAALEKSMVGIVSTQGENTPCSMALGPQADRARLGVAAGGGVPVSFSTISISDGTSMNHAGMRMSLLSRETIADSVELVVRGHAYDALVAFAGCDKTLPAMMMAIVRLNVPAVFLYGGATLPGHAASGQVTILDTIEAVGRVQHGTMPAAELKAMERTCTPSAGSCPGQFTANTMAMVGEALGLSPLGSAMMPAVYSERLAIAQRAGEHVMRALAAGGPLPRQLVTRASLENACAAVAATGGSTNAALHIPAIAHEAGIAFTLDDVARVFKRTPLIADLQPGGRYLARDLHEAGGVPVVLKALLDGGHIDGSVLTLDGRTLAEALADTPAPDGKVVRACGQALHPTGGVAVLKGNLSPDGALLKIAGLKSLKFSGPARVFENEEACMRAVSTHAYQPGEVLVIRNEGPRGGPGMREMLSVTAALYGQGMGEKVALLTDGRFSGATRGLCIGYAGPEAAAGGPIALLRDGDMIHIDAEADTLDVALSDEELARRRAAYQAPPQARLAGALEKYAALVRPACLGAVTHSGQVDWPYETPEAE.

Position 51 (Cys51) interacts with [2Fe-2S] cluster. Asp83 is a Mg(2+) binding site. Residue Cys124 participates in [2Fe-2S] cluster binding. The Mg(2+) site is built by Asp125 and Lys126. Lys126 is modified (N6-carboxylysine). Cys196 contributes to the [2Fe-2S] cluster binding site. Glu446 is a binding site for Mg(2+). The Proton acceptor role is filled by Ser472.

This sequence belongs to the IlvD/Edd family. Homodimer. The cofactor is [2Fe-2S] cluster. It depends on Mg(2+) as a cofactor.

The enzyme catalyses (2R)-2,3-dihydroxy-3-methylbutanoate = 3-methyl-2-oxobutanoate + H2O. It carries out the reaction (2R,3R)-2,3-dihydroxy-3-methylpentanoate = (S)-3-methyl-2-oxopentanoate + H2O. It functions in the pathway amino-acid biosynthesis; L-isoleucine biosynthesis; L-isoleucine from 2-oxobutanoate: step 3/4. It participates in amino-acid biosynthesis; L-valine biosynthesis; L-valine from pyruvate: step 3/4. Its function is as follows. Functions in the biosynthesis of branched-chain amino acids. Catalyzes the dehydration of (2R,3R)-2,3-dihydroxy-3-methylpentanoate (2,3-dihydroxy-3-methylvalerate) into 2-oxo-3-methylpentanoate (2-oxo-3-methylvalerate) and of (2R)-2,3-dihydroxy-3-methylbutanoate (2,3-dihydroxyisovalerate) into 2-oxo-3-methylbutanoate (2-oxoisovalerate), the penultimate precursor to L-isoleucine and L-valine, respectively. In Bordetella bronchiseptica (strain ATCC BAA-588 / NCTC 13252 / RB50) (Alcaligenes bronchisepticus), this protein is Dihydroxy-acid dehydratase 2.